The primary structure comprises 49 residues: Large ribosomal subunit protein bL33 (49 aa).

This sequence belongs to the bacterial ribosomal protein bL33 family.

The polypeptide is Large ribosomal subunit protein bL33 (Pelotomaculum thermopropionicum (strain DSM 13744 / JCM 10971 / SI)).